Here is a 635-residue protein sequence, read N- to C-terminus: Extracellular metalloproteinase 1 (635 aa).

The signal sequence occupies residues 1–19 (MHGLLLAAGLLSLPLHVLA). The propeptide occupies 20 to 246 (HPQPSTSTSL…VHNVVDYVAH (227 aa)). Asparagine 287 carries N-linked (GlcNAc...) asparagine glycosylation. Zn(2+) is bound at residue histidine 430. Residue glutamate 431 is part of the active site. A Zn(2+)-binding site is contributed by histidine 434. 3 N-linked (GlcNAc...) asparagine glycosylation sites follow: asparagine 475, asparagine 594, and asparagine 623.

It belongs to the peptidase M36 family. The cofactor is Zn(2+).

The protein resides in the secreted. In terms of biological role, secreted metalloproteinase probably acting as a virulence factor. The chain is Extracellular metalloproteinase 1 (MEP1) from Arthroderma benhamiae (Trichophyton mentagrophytes).